The sequence spans 387 residues: EP300-interacting inhibitor of differentiation 3 (387 aa).

Basic and acidic residues predominate over residues 1 to 19 (MSEEKCSLTGGEEKGEELA). The interval 1–77 (MSEEKCSLTG…SDDLSPEAPC (77 aa)) is disordered. A compositionally biased stretch (acidic residues) spans 32–72 (EEDDDDDEEALKKEEEEEEEEEEEDEEEEEEGPDSSSDDLS).

The protein belongs to the NSE4 family. In terms of assembly, component of the SMC5-SMC6 complex which consists at least of SMC5, SMC6, NSMCE2, NSMCE1, NSMCE4A or EID3 and NSMCE3. NSMCE1, NSMCE4A or EID3 and NSMCE3 probably form a subcomplex that bridges the head domains of the SMC5:SMC6 heterodimer. Homodimer, and heterodimer with EID2. Interacts with the C-terminal region of CREBBP.

Its subcellular location is the nucleus. The protein resides in the cytoplasm. The protein localises to the chromosome. It is found in the telomere. Functionally, tissue-specific component of the SMC5-SMC6 complex, a complex involved in repair of DNA double-strand breaks by homologous recombination. The complex may promote sister chromatid homologous recombination by recruiting the SMC1-SMC3 cohesin complex to double-strand breaks. The complex is required for telomere maintenance via recombination and mediates sumoylation of shelterin complex (telosome) components. In terms of biological role, acts as a repressor of nuclear receptor-dependent transcription possibly by interfering with CREBBP-dependent coactivation. May function as a coinhibitor of other CREBBP/EP300-dependent transcription factors. This chain is EP300-interacting inhibitor of differentiation 3, found in Rattus norvegicus (Rat).